The chain runs to 241 residues: tRNA pseudouridine synthase A (241 aa).

Asp53 (nucleophile) is an active-site residue. Tyr110 contacts substrate.

This sequence belongs to the tRNA pseudouridine synthase TruA family. As to quaternary structure, homodimer.

The enzyme catalyses uridine(38/39/40) in tRNA = pseudouridine(38/39/40) in tRNA. Formation of pseudouridine at positions 38, 39 and 40 in the anticodon stem and loop of transfer RNAs. In Malacoplasma penetrans (strain HF-2) (Mycoplasma penetrans), this protein is tRNA pseudouridine synthase A.